Reading from the N-terminus, the 337-residue chain is Glyceraldehyde-3-phosphate dehydrogenase (337 aa).

NAD(+) is bound by residues 13–14 (RI), aspartate 35, and arginine 80. Residues 151–153 (SCT), threonine 182, 211–212 (TG), and arginine 234 each bind D-glyceraldehyde 3-phosphate. Residue cysteine 152 is the Nucleophile of the active site. NAD(+) is bound at residue asparagine 316.

The protein belongs to the glyceraldehyde-3-phosphate dehydrogenase family. As to quaternary structure, homotetramer.

The protein resides in the cytoplasm. The catalysed reaction is D-glyceraldehyde 3-phosphate + phosphate + NAD(+) = (2R)-3-phospho-glyceroyl phosphate + NADH + H(+). Its pathway is carbohydrate degradation; glycolysis; pyruvate from D-glyceraldehyde 3-phosphate: step 1/5. This is Glyceraldehyde-3-phosphate dehydrogenase (GPD1) from Monascus purpureus (Red mold).